Here is a 122-residue protein sequence, read N- to C-terminus: Secreted RxLR effector protein 80 (122 aa).

Positions 1-21 (MKKRALPIVIFVISLQQSSQS) are cleaved as a signal peptide. The RxLR signature appears at 72–75 (RSLR).

It belongs to the RxLR effector family.

The protein localises to the secreted. The protein resides in the host endoplasmic reticulum membrane. In terms of biological role, secreted effector that dos not suppress the host cell death induced by cell death-inducing proteins. In Plasmopara viticola (Downy mildew of grapevine), this protein is Secreted RxLR effector protein 80.